The chain runs to 462 residues: UDP-N-acetylmuramoylalanine--D-glutamate ligase (462 aa).

Glycine 125–threonine 131 lines the ATP pocket.

This sequence belongs to the MurCDEF family.

The protein localises to the cytoplasm. The enzyme catalyses UDP-N-acetyl-alpha-D-muramoyl-L-alanine + D-glutamate + ATP = UDP-N-acetyl-alpha-D-muramoyl-L-alanyl-D-glutamate + ADP + phosphate + H(+). It functions in the pathway cell wall biogenesis; peptidoglycan biosynthesis. Cell wall formation. Catalyzes the addition of glutamate to the nucleotide precursor UDP-N-acetylmuramoyl-L-alanine (UMA). The protein is UDP-N-acetylmuramoylalanine--D-glutamate ligase of Clostridium acetobutylicum (strain ATCC 824 / DSM 792 / JCM 1419 / IAM 19013 / LMG 5710 / NBRC 13948 / NRRL B-527 / VKM B-1787 / 2291 / W).